The primary structure comprises 197 residues: Glycerol-3-phosphate acyltransferase (197 aa).

Helical transmembrane passes span 1 to 21, 69 to 89, 110 to 130, and 152 to 172; these read MTAL…GLLV, LPML…AVVG, VMLF…LVVL, and VFFT…SFIF.

Belongs to the PlsY family. As to quaternary structure, probably interacts with PlsX.

It is found in the cell membrane. The catalysed reaction is an acyl phosphate + sn-glycerol 3-phosphate = a 1-acyl-sn-glycero-3-phosphate + phosphate. It participates in lipid metabolism; phospholipid metabolism. Its function is as follows. Catalyzes the transfer of an acyl group from acyl-phosphate (acyl-PO(4)) to glycerol-3-phosphate (G3P) to form lysophosphatidic acid (LPA). This enzyme utilizes acyl-phosphate as fatty acyl donor, but not acyl-CoA or acyl-ACP. The polypeptide is Glycerol-3-phosphate acyltransferase (Geobacillus kaustophilus (strain HTA426)).